Reading from the N-terminus, the 696-residue chain is DNA topoisomerase 6 subunit B (696 aa).

Residues 1–36 (MDDDAGDGAASGGTKRKVTAASSSAAAKGKAAGKGK) are disordered. Residues 20–36 (AASSSAAAKGKAAGKGK) show a composition bias toward low complexity. ATP is bound by residues Asn-88, Asp-187, 208–209 (TK), 217–224 (GKFGLGAK), and Lys-543.

The protein belongs to the TOP6B family. In terms of assembly, homodimer. Heterotetramer of two TOP6A and two TOP6B subunits. Interacts with SPO11-2 and TOP6A3. Highly expressed in flowers before pollination. Expressed in roots and shoots.

The protein localises to the nucleus. The catalysed reaction is ATP-dependent breakage, passage and rejoining of double-stranded DNA.. Functionally, component of the DNA topoisomerase VI involved in chromatin organization and progression of endoreduplication cycles. Relaxes both positive and negative superturns and exhibits a strong decatenase activity. The B subunit binds ATP. May be involved in cell proliferation and stress tolerance. The chain is DNA topoisomerase 6 subunit B from Oryza sativa subsp. indica (Rice).